A 325-amino-acid chain; its full sequence is Diaminopimelate epimerase (325 aa).

Substrate is bound by residues Asn11 and Asn69. The active-site Proton donor is Cys78. Substrate is bound by residues 79 to 80 (GN), Asn166, Asn203, and 221 to 222 (ER). The active-site Proton acceptor is the Cys230. Residue 231–232 (GT) coordinates substrate.

It belongs to the diaminopimelate epimerase family. As to quaternary structure, homodimer.

It is found in the cytoplasm. The catalysed reaction is (2S,6S)-2,6-diaminopimelate = meso-2,6-diaminopimelate. It participates in amino-acid biosynthesis; L-lysine biosynthesis via DAP pathway; DL-2,6-diaminopimelate from LL-2,6-diaminopimelate: step 1/1. Its function is as follows. Catalyzes the stereoinversion of LL-2,6-diaminopimelate (L,L-DAP) to meso-diaminopimelate (meso-DAP), a precursor of L-lysine and an essential component of the bacterial peptidoglycan. This chain is Diaminopimelate epimerase, found in Ligilactobacillus salivarius (strain UCC118) (Lactobacillus salivarius).